The chain runs to 610 residues: Elongation factor 4 (610 aa).

The 183-residue stretch at 11–193 (EKIRNFSIIA…QIVEKVPAPS (183 aa)) folds into the tr-type G domain. Residues 23–28 (DHGKST) and 140–143 (NKID) contribute to the GTP site.

It belongs to the TRAFAC class translation factor GTPase superfamily. Classic translation factor GTPase family. LepA subfamily.

It localises to the cell membrane. It catalyses the reaction GTP + H2O = GDP + phosphate + H(+). In terms of biological role, required for accurate and efficient protein synthesis under certain stress conditions. May act as a fidelity factor of the translation reaction, by catalyzing a one-codon backward translocation of tRNAs on improperly translocated ribosomes. Back-translocation proceeds from a post-translocation (POST) complex to a pre-translocation (PRE) complex, thus giving elongation factor G a second chance to translocate the tRNAs correctly. Binds to ribosomes in a GTP-dependent manner. In Streptococcus uberis (strain ATCC BAA-854 / 0140J), this protein is Elongation factor 4.